The sequence spans 159 residues: Large ribosomal subunit protein uL22 (159 aa).

This sequence belongs to the universal ribosomal protein uL22 family. As to quaternary structure, part of the 50S ribosomal subunit.

In terms of biological role, this protein binds specifically to 23S rRNA. It makes multiple contacts with different domains of the 23S rRNA in the assembled 50S subunit and ribosome. Functionally, the globular domain of the protein is located near the polypeptide exit tunnel on the outside of the subunit, while an extended beta-hairpin is found that lines the wall of the exit tunnel in the center of the 70S ribosome. This is Large ribosomal subunit protein uL22 from Methanopyrus kandleri (strain AV19 / DSM 6324 / JCM 9639 / NBRC 100938).